A 507-amino-acid chain; its full sequence is 2,3-bisphosphoglycerate-independent phosphoglycerate mutase (507 aa).

Mn(2+) is bound by residues aspartate 13 and serine 63. Serine 63 functions as the Phosphoserine intermediate in the catalytic mechanism. Substrate contacts are provided by residues histidine 124, arginine 153 to aspartate 154, arginine 183, arginine 189, arginine 254 to arginine 257, and lysine 330. 5 residues coordinate Mn(2+): aspartate 396, histidine 400, aspartate 437, histidine 438, and histidine 456.

This sequence belongs to the BPG-independent phosphoglycerate mutase family. Monomer. Mn(2+) serves as cofactor.

It carries out the reaction (2R)-2-phosphoglycerate = (2R)-3-phosphoglycerate. Its pathway is carbohydrate degradation; glycolysis; pyruvate from D-glyceraldehyde 3-phosphate: step 3/5. Catalyzes the interconversion of 2-phosphoglycerate and 3-phosphoglycerate. The sequence is that of 2,3-bisphosphoglycerate-independent phosphoglycerate mutase from Paracoccus denitrificans (strain Pd 1222).